The primary structure comprises 227 residues: MLPARPEPLSVAVEETAVVVVDMQNAYASPGGYLDIAGFDISGAKAAISAIAETVEAARAAGVTVIYFQNGWDKDYVEAGGPGSPNWHKSNALKTMRKKPELQGQLLAKGGWDYALVDQLAPQPGDIVVPKPRYSGFFNSQFDSILRARGIRNLVFCGIATNVCVESTLRDGFHLEYFGILLEDATHQAGPEYVQKAAIYNVETFFGWVSTVADFRRAFAQIPPKED.

D22 serves as the catalytic Proton acceptor. Residue K131 is part of the active site. Catalysis depends on C164, which acts as the Nucleophile.

Belongs to the isochorismatase family. RutB subfamily.

It carries out the reaction (Z)-3-ureidoacrylate + H2O + H(+) = (Z)-3-aminoacrylate + NH4(+) + CO2. It catalyses the reaction (Z)-3-ureidoacrylate + H2O = (Z)-3-aminoacrylate + carbamate + H(+). The catalysed reaction is (Z)-2-methylureidoacrylate + H2O + H(+) = (Z)-2-methylaminoacrylate + NH4(+) + CO2. Hydrolyzes ureidoacrylate to form aminoacrylate and carbamate. The carbamate hydrolyzes spontaneously, thereby releasing one of the nitrogen atoms of the pyrimidine ring as ammonia and one of its carbon atoms as CO2. The chain is Ureidoacrylate amidohydrolase RutB from Azorhizobium caulinodans (strain ATCC 43989 / DSM 5975 / JCM 20966 / LMG 6465 / NBRC 14845 / NCIMB 13405 / ORS 571).